The primary structure comprises 427 residues: Trigger factor (427 aa).

The PPIase FKBP-type domain occupies 163–248 (GDTVVIDFVG…IHEVKAKEVP (86 aa)).

The protein belongs to the FKBP-type PPIase family. Tig subfamily.

It localises to the cytoplasm. It catalyses the reaction [protein]-peptidylproline (omega=180) = [protein]-peptidylproline (omega=0). Functionally, involved in protein export. Acts as a chaperone by maintaining the newly synthesized protein in an open conformation. Functions as a peptidyl-prolyl cis-trans isomerase. This Streptococcus pneumoniae (strain Taiwan19F-14) protein is Trigger factor.